The following is a 292-amino-acid chain: Siderophore triacetylfusarinine C esterase (292 aa).

Arginine 97, serine 148, tyrosine 149, serine 174, tryptophan 176, and histidine 267 together coordinate triacetylfusarinine C.

It belongs to the esterase D family.

It localises to the cytoplasm. It catalyses the reaction triacetylfusarinine C + 3 H2O = 3 N-acetylfusarinine + Fe(3+). Functionally, displays specific triacetylfusarinine C (TAFC) esterase activity but does not hydrolyze fusarinine C, which has the same core structure as TAFC. Hydrolysis optimizes but is not essential for TAFC-mediated iron uptake. Both extra- and intracellular siderophores have been shown to be crucial for the virulence. Subsequent to chelation of iron and uptake, FsC and TAFC are hydrolyzed and the iron is transferred to the metabolism or to the intracellular siderophore ferricrocin (FC) for transport and storage of iron. Hydrolyzes both TAFC and DF-TAFC with equal efficiencies, suggesting that its function might not be restricted to the release of iron from the siderophore but might also include the degradation of the iron-free chelator to protect cells. The protein is Siderophore triacetylfusarinine C esterase of Aspergillus fumigatus (strain ATCC MYA-4609 / CBS 101355 / FGSC A1100 / Af293) (Neosartorya fumigata).